The sequence spans 436 residues: F-box/LRR-repeat protein 20 (436 aa).

The region spanning 22 to 68 (AVINKKLPKELLLRIFSFLDVVTLCRCAQVSRAWNVLALDGSNWQRI) is the F-box domain. LRR repeat units lie at residues 74 to 100 (QRDI…SLRG), 101 to 126 (CLGV…NLNG), 127 to 152 (CTKT…DLAS), 153 to 178 (CTSI…NISW), 179 to 204 (CDQV…FLKG), 205 to 230 (CTQL…NLQT), 231 to 256 (CLQI…CASG), 257 to 282 (CSNI…EVAR), 283 to 308 (CSQL…DLEE), 309 to 334 (CVQI…SLSH), 335 to 363 (CELI…ELDN), 364 to 388 (CPLI…ELYD), and 389 to 414 (CQQI…AYFA). Phosphothreonine is present on Thr417. A Phosphoserine modification is found at Ser421.

In terms of assembly, interacts with SKP1 and CUL1.

Its subcellular location is the cytoplasm. In terms of biological role, substrate-recognition component of the SCF (SKP1-CUL1-F-box protein)-type E3 ubiquitin ligase complex. Role in neural transmission. This Bos taurus (Bovine) protein is F-box/LRR-repeat protein 20 (FBXL20).